Reading from the N-terminus, the 1350-residue chain is 1-phosphatidylinositol 4,5-bisphosphate phosphodiesterase gamma plc-3 (1350 aa).

The interval 1–40 (MQHGSLGPSSSSRKTTVTSTAGSVHLHHRSSNGFSTASRA) is disordered. The segment covering 9–20 (SSSSRKTTVTST) has biased composition (low complexity). Residues 31–40 (SNGFSTASRA) show a composition bias toward polar residues. The region spanning 352–503 (HDMSRPLSHY…LKKKIIVKHK (152 aa)) is the PI-PLC X-box domain. Active-site residues include histidine 367 and histidine 419. The disordered stretch occupies residues 570-594 (NPNDDTVSVSGDEEREEETPSGFGV). SH2 domains follow at residues 605–704 (WFHG…TIPC) and 715–804 (WFSA…RFPV). Positions 832 to 890 (DKEVQARALRPYRGTADDELSFPANVIITVLRKEEGLWRGRYGSLTGWFPSAHVQEILP) constitute an SH3 domain. A PH domain is found at 855–960 (ANVIITVLRK…WQNNLFELTR (106 aa)). The PI-PLC Y-box domain maps to 982–1092 (LSNLVVYCQA…CGYLLKPDYM (111 aa)). Residues 1099 to 1220 (PTNTEKFATA…CGFRSVPLKN (122 aa)) form the C2 domain. The disordered stretch occupies residues 1270 to 1350 (GDSIPREMAP…KFSFGKSSKS (81 aa)). Residues 1283–1329 (TSATDRSLDSPTNSESRATLLSGQRGSQDSMDSAAETSSIASGTISS) are compositionally biased toward polar residues. The segment covering 1340–1350 (KKFSFGKSSKS) has biased composition (low complexity).

It depends on Ca(2+) as a cofactor. As to expression, expressed in intestine, isthmus of the pharynx, proximal gonad sheath cells, spermatheca and uterine sheath cells. In males, expressed in the valve cell, the vas deferens and retractor and ventral protactor muscles.

It catalyses the reaction a 1,2-diacyl-sn-glycero-3-phospho-(1D-myo-inositol-4,5-bisphosphate) + H2O = 1D-myo-inositol 1,4,5-trisphosphate + a 1,2-diacyl-sn-glycerol + H(+). In terms of biological role, mediates the production of the second messenger molecules diacylglycerol (DAG) and inositol 1,4,5-trisphosphate (IP3) which plays an important role in the regulation of intracellular signaling cascades. Regulates basal and ovulatory sheath cell contractions by controlling Ca(2+) oscillations via IP3-mediated activation of IP3 receptor itr-1. In intestinal epithelial cells, regulates Ca(2+) oscillations which control posterior body wall muscle contractions required for defecation by IP3-mediated activation of itr-1 and probably by activating TRPM channels gon-2 and gtl-1 by reducing PIP2 levels. By activating tpa-1 via DAG production, required for the expression of antimicrobial peptide nlp-29 in the epidermis in response to fungal infection or physical injury. By triggering Ca(2+) transient via IP3-mediated activation of IPR3 receptor itr-1 in ASH sensory neurons, involved in avoidance behavior in response to nose touch. Probably by regulating neuronal transmission in ALA neurons, mediates the decrease in pharyngeal pumping and locomotion during the quiescent state that precedes each larval molt, downstream of lin-3 and receptor let-23 and upstream of tpa-1 but not itr-1. During embryogenesis, may play an role in epidermal morphogenesis together with plc-1. Probably downstream of receptor daf-2, regulates male-sex muscle excitability in the absence of food. The protein is 1-phosphatidylinositol 4,5-bisphosphate phosphodiesterase gamma plc-3 of Caenorhabditis elegans.